A 239-amino-acid polypeptide reads, in one-letter code: Probable septum site-determining protein MinC (239 aa).

It belongs to the MinC family. In terms of assembly, interacts with MinD and FtsZ.

Functionally, cell division inhibitor that blocks the formation of polar Z ring septums. Rapidly oscillates between the poles of the cell to destabilize FtsZ filaments that have formed before they mature into polar Z rings. Prevents FtsZ polymerization. The protein is Probable septum site-determining protein MinC of Colwellia psychrerythraea (strain 34H / ATCC BAA-681) (Vibrio psychroerythus).